A 606-amino-acid chain; its full sequence is NADH-ubiquinone oxidoreductase chain 5 (606 aa).

Helical transmembrane passes span 1 to 21 (MNIFPSLMLTSLFTLTLPIIA), 38 to 58 (NIISFAFIISLIPTMMFIYSG), 87 to 107 (MIFVPVALFVTWSIMEFSIWY), 114 to 134 (ITQFFKYLLMFLITMMILVTA), 140 to 160 (LFIGWEGVGIMSFLLIGWWYG), 171 to 191 (AILYNRIGDIGFIMSMAWFLS), 213 to 233 (LMGLLLAATGKSAQFGLHPWL), 241 to 261 (TPVSALLHSSTMVVAGVFLLI), 273 to 293 (AQTLTLCLGAITTLFTAICAL), 301 to 320 (IIAFSTSSQLGLMIVTIGIN), 325 to 347 (AFLHICTHAFFKAMLFMCSGSII), 366 to 386 (MPFTATSLIIGSFALTGMPFL), 409 to 429 (LLMTLIATSLTAAYSTRMIFF), 457 to 477 (LLIGSIFAGFFISNNIYPTTT), 488 to 508 (LMALIVTILGFALALELSLAT), and 582 to 602 (GLIKLYFLSFLITLTLSLLLL).

This sequence belongs to the complex I subunit 5 family. As to quaternary structure, core subunit of respiratory chain NADH dehydrogenase (Complex I) which is composed of 45 different subunits.

The protein resides in the mitochondrion inner membrane. The catalysed reaction is a ubiquinone + NADH + 5 H(+)(in) = a ubiquinol + NAD(+) + 4 H(+)(out). Functionally, core subunit of the mitochondrial membrane respiratory chain NADH dehydrogenase (Complex I) which catalyzes electron transfer from NADH through the respiratory chain, using ubiquinone as an electron acceptor. Essential for the catalytic activity and assembly of complex I. The protein is NADH-ubiquinone oxidoreductase chain 5 (MT-ND5) of Rhinoceros unicornis (Greater Indian rhinoceros).